Here is a 137-residue protein sequence, read N- to C-terminus: Small heat shock protein IbpA (137 aa).

The region spanning 28–137 (NQSNGGYPPY…SLKPRRIEIK (110 aa)) is the sHSP domain.

The protein belongs to the small heat shock protein (HSP20) family. As to quaternary structure, monomer. Forms homomultimers of about 100-150 subunits at optimal growth temperatures. Conformation changes to monomers at high temperatures or high ionic concentrations.

Its subcellular location is the cytoplasm. In terms of biological role, associates with aggregated proteins, together with IbpB, to stabilize and protect them from irreversible denaturation and extensive proteolysis during heat shock and oxidative stress. Aggregated proteins bound to the IbpAB complex are more efficiently refolded and reactivated by the ATP-dependent chaperone systems ClpB and DnaK/DnaJ/GrpE. Its activity is ATP-independent. This is Small heat shock protein IbpA from Yersinia pseudotuberculosis serotype O:1b (strain IP 31758).